Consider the following 463-residue polypeptide: L-seryl-tRNA(Sec) selenium transferase (463 aa).

Lys-295 is subject to N6-(pyridoxal phosphate)lysine.

It belongs to the SelA family. Homodecamer; pentamer of dimers. Binds only one seryl-tRNA(Sec) per dimer. It depends on pyridoxal 5'-phosphate as a cofactor.

It localises to the cytoplasm. It catalyses the reaction L-seryl-tRNA(Sec) + selenophosphate + H(+) = L-selenocysteinyl-tRNA(Sec) + phosphate. It participates in aminoacyl-tRNA biosynthesis; selenocysteinyl-tRNA(Sec) biosynthesis; selenocysteinyl-tRNA(Sec) from L-seryl-tRNA(Sec) (bacterial route): step 1/1. In terms of biological role, converts seryl-tRNA(Sec) to selenocysteinyl-tRNA(Sec) required for selenoprotein biosynthesis. This Escherichia coli (strain 55989 / EAEC) protein is L-seryl-tRNA(Sec) selenium transferase.